A 334-amino-acid chain; its full sequence is Dihydroorotate dehydrogenase (quinone) (334 aa).

FMN contacts are provided by residues 61–65 (AGLDK) and Thr-85. Lys-65 contributes to the substrate binding site. 110 to 114 (NRMGF) is a substrate binding site. The FMN site is built by Asn-138 and Asn-171. Asn-171 provides a ligand contact to substrate. The Nucleophile role is filled by Ser-174. Asn-176 contributes to the substrate binding site. FMN contacts are provided by Lys-216 and Thr-244. Residue 245 to 246 (NT) participates in substrate binding. FMN is bound by residues Gly-266, Gly-295, and 316 to 317 (YT).

The protein belongs to the dihydroorotate dehydrogenase family. Type 2 subfamily. In terms of assembly, monomer. It depends on FMN as a cofactor.

It localises to the cell membrane. It catalyses the reaction (S)-dihydroorotate + a quinone = orotate + a quinol. It participates in pyrimidine metabolism; UMP biosynthesis via de novo pathway; orotate from (S)-dihydroorotate (quinone route): step 1/1. In terms of biological role, catalyzes the conversion of dihydroorotate to orotate with quinone as electron acceptor. The chain is Dihydroorotate dehydrogenase (quinone) from Idiomarina loihiensis (strain ATCC BAA-735 / DSM 15497 / L2-TR).